The primary structure comprises 429 residues: Enolase (429 aa).

(2R)-2-phosphoglycerate is bound at residue glutamine 163. Glutamate 205 acts as the Proton donor in catalysis. The Mg(2+) site is built by aspartate 242, glutamate 287, and aspartate 314. (2R)-2-phosphoglycerate contacts are provided by lysine 339, arginine 368, serine 369, and lysine 390. Lysine 339 functions as the Proton acceptor in the catalytic mechanism.

Belongs to the enolase family. It depends on Mg(2+) as a cofactor.

The protein resides in the cytoplasm. It is found in the secreted. Its subcellular location is the cell surface. The enzyme catalyses (2R)-2-phosphoglycerate = phosphoenolpyruvate + H2O. The protein operates within carbohydrate degradation; glycolysis; pyruvate from D-glyceraldehyde 3-phosphate: step 4/5. In terms of biological role, catalyzes the reversible conversion of 2-phosphoglycerate (2-PG) into phosphoenolpyruvate (PEP). It is essential for the degradation of carbohydrates via glycolysis. This is Enolase from Salinibacter ruber (strain DSM 13855 / M31).